Here is a 1074-residue protein sequence, read N- to C-terminus: Calcium-transporting ATPase 8, plasma membrane-type (1074 aa).

The interval 1–33 (MTSLLKSSPGRRRGGDVESGKSEHADSDSDTFY) is disordered. The Cytoplasmic portion of the chain corresponds to 1 to 180 (MTSLLKSSPG…NTYPRKKGKG (180 aa)). The span at 13 to 27 (RGGDVESGKSEHADS) shows a compositional bias: basic and acidic residues. Residues 43-54 (RLQQWRKAALVL) are interaction with calmodulin. The helical transmembrane segment at 181–201 (FLRFLWDACHDLTLIILMVAA) threads the bilayer. Topologically, residues 202-219 (VASLALGIKTEGIKEGWY) are extracellular. Residues 220–240 (DGGSIAFAVILVIVVTAVSDY) form a helical membrane-spanning segment. Topologically, residues 241 to 369 (KQSLQFQNLN…GEETPLQVRL (129 aa)) are cytoplasmic. Residues 370-389 (NGVATFIGSIGLAVAAAVLV) traverse the membrane as a helical segment. Residues 390 to 426 (ILLTRYFTGHTKDNNGGPQFVKGKTKVGHVIDDVVKV) are Extracellular-facing. A helical transmembrane segment spans residues 427-444 (LTVAVTIVVVAVPEGLPL). At 445–840 (AVTLTLAYSM…RWGRSVYANI (396 aa)) the chain is on the cytoplasmic side. Asp482 functions as the 4-aspartylphosphate intermediate in the catalytic mechanism. Positions 785 and 789 each coordinate Mg(2+). A helical membrane pass occupies residues 841–859 (QKFIQFQLTVNVAALVINV). Topologically, residues 860-870 (VAAISSGDVPL) are extracellular. Residues 871 to 891 (TAVQLLWVNLIMDTLGALALA) form a helical membrane-spanning segment. The Cytoplasmic portion of the chain corresponds to 892–911 (TEPPTDHLMGRPPVGRKEPL). A helical transmembrane segment spans residues 912–934 (ITNIMWRNLLIQAIYQVSVLLTL). At 935–949 (NFRGISILGLEHEVH) the chain is on the extracellular side. Residues 950-971 (EHATRVKNTIIFNAFVLCQAFN) traverse the membrane as a helical segment. Topologically, residues 972 to 989 (EFNARKPDEKNIFKGVIK) are cytoplasmic. Residues 990 to 1011 (NRLFMGIIVITLVLQVIIVEFL) traverse the membrane as a helical segment. The Extracellular portion of the chain corresponds to 1012-1021 (GKFASTTKLN). A helical membrane pass occupies residues 1022–1043 (WKQWLICVGIGVISWPLALVGK). At 1044 to 1074 (FIPVPAAPISNKLKVLKFWGKKKNSSGEGSL) the chain is on the cytoplasmic side.

The protein belongs to the cation transport ATPase (P-type) (TC 3.A.3) family. Type IIB subfamily.

It is found in the cell membrane. The catalysed reaction is Ca(2+)(in) + ATP + H2O = Ca(2+)(out) + ADP + phosphate + H(+). Activated by calmodulin. Its function is as follows. This magnesium-dependent enzyme catalyzes the hydrolysis of ATP coupled with the translocation of calcium from the cytosol out of the cell. This Arabidopsis thaliana (Mouse-ear cress) protein is Calcium-transporting ATPase 8, plasma membrane-type (ACA8).